Reading from the N-terminus, the 224-residue chain is Heme response regulator HssR (224 aa).

The Response regulatory domain maps to 3-116; the sequence is TCLIVDDDPK…ELMFRIKAVL (114 aa). Residue aspartate 52 is modified to 4-aspartylphosphate. Positions 124–222 form a DNA-binding region, ompR/PhoB-type; sequence NNEVSIGNLT…VRGLGYKVDD (99 aa).

In terms of processing, phosphorylated by HssS.

It localises to the cytoplasm. Functionally, member of the two-component regulatory system HssS/HssR involved in intracellular heme homeostasis and tempering of staphylococcal virulence. Phosphorylated HssR binds to a direct repeat sequence within hrtAB promoter and activates the expression of hrtAB, an efflux pump, in response to extracellular heme, hemin, hemoglobin or blood. The polypeptide is Heme response regulator HssR (hssR) (Staphylococcus saprophyticus subsp. saprophyticus (strain ATCC 15305 / DSM 20229 / NCIMB 8711 / NCTC 7292 / S-41)).